A 130-amino-acid chain; its full sequence is Small ribosomal subunit protein uS8 (130 aa).

Belongs to the universal ribosomal protein uS8 family. Part of the 30S ribosomal subunit. Contacts proteins S5 and S12.

In terms of biological role, one of the primary rRNA binding proteins, it binds directly to 16S rRNA central domain where it helps coordinate assembly of the platform of the 30S subunit. The sequence is that of Small ribosomal subunit protein uS8 from Idiomarina loihiensis (strain ATCC BAA-735 / DSM 15497 / L2-TR).